The sequence spans 4265 residues: Dynein axonemal heavy chain 1 (4265 aa).

Residues 1-88 (MEQPNSKGYS…KSPLTGTDKK (88 aa)) are disordered. The tract at residues 1-1542 (MEQPNSKGYS…YIRAVNAEFI (1542 aa)) is stem. Over residues 60–69 (PHLPLPPAPP) the composition is skewed to pro residues. 4 AAA regions span residues 1543-1764 (YGYE…VISA), 1824-2057 (EAIR…SSVK), 2189-2449 (TMVP…VFQG), and 2547-2799 (DYNQ…LTRH). The GPAGTGKT motif signature appears at 1581–1588 (GPAGTGKT). 1581–1588 (GPAGTGKT) is an ATP binding site. The short motif at 1631–1637 (CFDEFNR) is the CFDEFNR motif element. ATP is bound by residues 1862–1869 (GPTGSGKS), 2227–2234 (GPTGTGKT), and 2586–2593 (GVGGSGRS). The segment at 2814 to 3112 (FSILIGQKKL…EELELKCEQC (299 aa)) is stalk. A coiled-coil region spans residues 3074–3122 (LDEAKQRLREVEDGIATMQAKYRECITKKEELELKCEQCEQRLGRAGKL). AAA regions lie at residues 3197 to 3427 (LGNP…EIQA) and 3640 to 3859 (MQDF…QLKM).

The protein belongs to the dynein heavy chain family. Consists of at least two heavy chains and a number of intermediate and light chains. As to expression, expressed primarily in trachea and testis, 2 tissues containing axonemal structures. Also expressed in brain.

The protein resides in the cytoplasm. Its subcellular location is the cytoskeleton. It is found in the cilium axoneme. It localises to the cell projection. The protein localises to the cilium. The protein resides in the flagellum. Functionally, force generating protein of cilia required for sperm flagellum motility. Produces force towards the minus ends of microtubules. Dynein has ATPase activity; the force-producing power stroke is thought to occur on release of ADP. Required in spermatozoa for the formation of the inner dynein arms and biogenesis of the axoneme. This is Dynein axonemal heavy chain 1 from Homo sapiens (Human).